Consider the following 365-residue polypeptide: Probable dual-specificity RNA methyltransferase RlmN (365 aa).

Glutamate 111 (proton acceptor) is an active-site residue. The region spanning 117-351 (ADDRMTACIS…VNIRRSRGKD (235 aa)) is the Radical SAM core domain. Cysteines 124 and 356 form a disulfide. [4Fe-4S] cluster contacts are provided by cysteine 131, cysteine 135, and cysteine 138. S-adenosyl-L-methionine is bound by residues 182–183 (GE), serine 214, 237–239 (SLH), and asparagine 313. Cysteine 356 acts as the S-methylcysteine intermediate in catalysis.

Belongs to the radical SAM superfamily. RlmN family. It depends on [4Fe-4S] cluster as a cofactor.

The protein localises to the cytoplasm. It catalyses the reaction adenosine(2503) in 23S rRNA + 2 reduced [2Fe-2S]-[ferredoxin] + 2 S-adenosyl-L-methionine = 2-methyladenosine(2503) in 23S rRNA + 5'-deoxyadenosine + L-methionine + 2 oxidized [2Fe-2S]-[ferredoxin] + S-adenosyl-L-homocysteine. The catalysed reaction is adenosine(37) in tRNA + 2 reduced [2Fe-2S]-[ferredoxin] + 2 S-adenosyl-L-methionine = 2-methyladenosine(37) in tRNA + 5'-deoxyadenosine + L-methionine + 2 oxidized [2Fe-2S]-[ferredoxin] + S-adenosyl-L-homocysteine. Functionally, specifically methylates position 2 of adenine 2503 in 23S rRNA and position 2 of adenine 37 in tRNAs. This Cytophaga hutchinsonii (strain ATCC 33406 / DSM 1761 / CIP 103989 / NBRC 15051 / NCIMB 9469 / D465) protein is Probable dual-specificity RNA methyltransferase RlmN.